Here is a 1708-residue protein sequence, read N- to C-terminus: Clathrin heavy chain 1 (1708 aa).

The segment at 1–492 is globular terminal domain; the sequence is MAAANAPIAM…VDNDLALKIY (492 aa). WD40-like repeat stretches follow at residues 25–67, 68–113, 114–155, 156–205, 206–270, 271–314, and 315–343; these read FVTF…RPIT, ADSA…MPEQ, VVFW…ANLA, NNQI…QALE, AHAA…PDFQ, DDFP…ISPD, and PIFLTAESSASGGFYAINRRGQVLHATVN. The interval 462–478 is binding site for the uncoating ATPase, involved in lattice disassembly; sequence ENWLAEDKLECSEELGD. The flexible linker stretch occupies residues 493–536; sequence IKARATPKVVAAFAERREFDKILIYSKQVGYTPDYLFLLQTILR. A distal segment region spans residues 537-648; that stretch reads TDPQGAVNFA…RALQHYTELP (112 aa). A heavy chain arm region spans residues 537–1708; sequence TDPQGAVNFA…AYGMPPMGSY (1172 aa). CHCR repeat units lie at residues 551 to 697, 700 to 842, 847 to 986, 993 to 1138, 1142 to 1283, 1288 to 1434, and 1437 to 1580; these read QMEG…QIVV, AKEY…PEDF, ILSV…QLID, LPES…VSEA, FIRA…FRLA, LNII…DLIN, and LNVL…KECF. A proximal segment region spans residues 653–1708; it reads VMVNTHAIEP…AYGMPPMGSY (1056 aa). Residues 1227-1536 are involved in binding clathrin light chain; that stretch reads AAKIIYAFIS…YIYKKAGRWK (310 aa). Residues 1564–1708 are trimerization; sequence SEDLLVYFIE…AYGMPPMGSY (145 aa).

It belongs to the clathrin heavy chain family. Clathrin triskelions, composed of 3 heavy chains and 3 light chains, are the basic subunits of the clathrin coat.

The protein localises to the cytoplasmic vesicle membrane. It localises to the membrane. The protein resides in the coated pit. Functionally, clathrin is the major protein of the polyhedral coat of coated pits and vesicles. The sequence is that of Clathrin heavy chain 1 from Oryza sativa subsp. japonica (Rice).